Reading from the N-terminus, the 414-residue chain is 2-acylphloroglucinol 4-prenyltransferase (414 aa).

The N-terminal 86 residues, 1-86, are a transit peptide targeting the chloroplast; that stretch reads MELSSVSSFS…LKPLSIFSCK (86 aa). 8 consecutive transmembrane segments (helical) span residues 153 to 173, 201 to 221, 229 to 249, 256 to 276, 281 to 301, 336 to 356, 359 to 379, and 394 to 414; these read FSWPLIFRALLGMLAILGSCF, ISVESAWLLTLSPAIIGFILI, LLTSLYCLAILSGTIYSVPPF, ITAFLCILMIHAGLNFSVYYA, LGLAFVWSPSFSFITAFITFM, LLGTGLLLLNYVAAISTAIIW, AFKSNIMLLSHAILAFSLFFQ, and KSFYEFIWILFSAEYVVYLFI.

Belongs to the UbiA prenyltransferase family. As to quaternary structure, component an active demethylxanthohumol (DMX) biosynthetic metabolon in glandular trichomes (lupulin glands) that encompasses a chalcone synthase (CHS) and a membrane-bound prenyltransferase. Interacts with PT2, forming a functional metabolon. Interacts with CHIL2; this interaction promotes catalytic activity. Mg(2+) serves as cofactor. In terms of tissue distribution, expressed in trichomes.

The protein localises to the plastid. The protein resides in the chloroplast membrane. The catalysed reaction is 2',4,4',6'-tetrahydroxychalcone + dimethylallyl diphosphate = desmethylxanthohumol + diphosphate. It carries out the reaction a 2-acylphloroglucinol + dimethylallyl diphosphate = a 2-acyl-4-prenylphloroglucinol + diphosphate. It participates in secondary metabolite biosynthesis. Its activity is regulated as follows. Stimulated by CHIL2 but inhibited by CHIL1. Involved in the biosynthesis of prenylated phenolics natural products which contribute to the bitter taste of beer and display broad biological activities. Catalyzes the first prenylation step in the beta-bitter acid pathway. Uses dimethylallyl diphosphate (DMAPP) as the prenyl donor. The polypeptide is 2-acylphloroglucinol 4-prenyltransferase (Humulus lupulus (European hop)).